Consider the following 691-residue polypeptide: DNA ligase (691 aa).

Residues 41–45 (DAEYD), 90–91 (SL), and glutamate 130 contribute to the NAD(+) site. Lysine 132 (N6-AMP-lysine intermediate) is an active-site residue. 4 residues coordinate NAD(+): arginine 153, glutamate 190, lysine 307, and lysine 331. Zn(2+) is bound by residues cysteine 425, cysteine 428, cysteine 443, and cysteine 449. Residues 610-691 (APQGVLAGKT…LHQLLEGNTP (82 aa)) enclose the BRCT domain.

It belongs to the NAD-dependent DNA ligase family. LigA subfamily. Requires Mg(2+) as cofactor. Mn(2+) is required as a cofactor.

It carries out the reaction NAD(+) + (deoxyribonucleotide)n-3'-hydroxyl + 5'-phospho-(deoxyribonucleotide)m = (deoxyribonucleotide)n+m + AMP + beta-nicotinamide D-nucleotide.. Its function is as follows. DNA ligase that catalyzes the formation of phosphodiester linkages between 5'-phosphoryl and 3'-hydroxyl groups in double-stranded DNA using NAD as a coenzyme and as the energy source for the reaction. It is essential for DNA replication and repair of damaged DNA. This Burkholderia cenocepacia (strain ATCC BAA-245 / DSM 16553 / LMG 16656 / NCTC 13227 / J2315 / CF5610) (Burkholderia cepacia (strain J2315)) protein is DNA ligase.